We begin with the raw amino-acid sequence, 382 residues long: uncharacterized protein (382 aa).

12 helical membrane passes run 8-28 (VMLLLCGLLLLTLAIAVLNTL), 45-65 (MVSSSYFTGNLVGTLFTGYLI), 75-95 (YLASLIFAAGCVGLGVMVGFW), 102-122 (FIAGIGCAMIWVVVESALMCS), 131-151 (LLAAYMMAYYMGTFLGQLLVS), 157-177 (LLHVLPWVTGMILAGILPLLF), 204-224 (LGVNGCIISGIVLGSLYGLMP), 231-251 (GMANASIGFWMAVLVSAGILG), 270-290 (VQVFVVILGSIAMLTQAAMAP), 291-311 (ALFILGAAGFTLYPVAMAWAC), 325-345 (ALLLSYTVGSLLGPSFAAMLM), and 349-369 (SDNLLFIMIASVSFIYLLMLL).

This sequence belongs to the major facilitator superfamily. YcaD (TC 2.A.1.26) family.

The protein resides in the cell inner membrane. This is an uncharacterized protein from Salmonella enteritidis PT4 (strain P125109).